A 576-amino-acid polypeptide reads, in one-letter code: MNIFNQLKQDIIVASRQLYNNQEIANTATIEIPKDSFNGDLSSNVAMIIAAKESIAPREVALKFKEVLITLPYIASIEIAGPGFINFTIKADSWQASIKDILQHEEKFFEIDIDKSRNINIEYVSANPTGPMHIGHARGAVYGDVLARILQKVSYSVTKEYYVNDAGSQINDLVSTVLLRYKEALGEQITIPAGLYPGEYLIPLGQILAKEYGNKLLTMNYAERFKIVKSFAVEKMLDLNRKDLADLGIKHDIFFSEQSLHDKGEIEETVKLLERMGLIYEGTLPAPKGKIHEEWDNRVQKLFKSTKYGDSQDRPIEKADGSWSYFASDLAYAKDKIERGANHLIYVLGADHSGYVKRIEAIVKALGKEQVKVDVKICQLVNFVENGVPVKMSKRLGNFASVQDVNHEVGKDIIRFMMLTRQNDKPLDFDLVKVKEQSRENPIFYVQYAHVRTISILSKARELIPESYNNFESGKYDLSLLSSEEEIEIIKLLASWTKTLEASAKYFEPHRIAFYLINLASKFHSMWNFGKENSDYRFVIESNKELTLARLALASAIQKVIASGLEVIGVEPMNKM.

A 'HIGH' region motif is present at residues 126 to 136; that stretch reads ANPTGPMHIGH.

This sequence belongs to the class-I aminoacyl-tRNA synthetase family. As to quaternary structure, monomer.

It localises to the cytoplasm. The catalysed reaction is tRNA(Arg) + L-arginine + ATP = L-arginyl-tRNA(Arg) + AMP + diphosphate. The protein is Arginine--tRNA ligase of Rickettsia peacockii (strain Rustic).